We begin with the raw amino-acid sequence, 431 residues long: Bifunctional protein GlmU (431 aa).

The segment at 1-223 (MNLSIVILAA…EENFKGVNSK (223 aa)) is pyrophosphorylase. Residues 8–11 (LAAG), K22, Q74, and 81–82 (GT) each bind UDP-N-acetyl-alpha-D-glucosamine. A Mg(2+)-binding site is contributed by D102. Residues G135, E149, N164, and N221 each contribute to the UDP-N-acetyl-alpha-D-glucosamine site. N221 contacts Mg(2+). Residues 224–244 (ADLAEAEAIMTGRIRRRWMRE) form a linker region. Residues 245-431 (GVRMRLPETI…FFARYFSSSK (187 aa)) are N-acetyltransferase. UDP-N-acetyl-alpha-D-glucosamine is bound by residues R308 and K325. H336 acts as the Proton acceptor in catalysis. UDP-N-acetyl-alpha-D-glucosamine-binding residues include Y339 and N350. Acetyl-CoA contacts are provided by residues A353, 359–360 (NY), S378, A396, and R413.

In the N-terminal section; belongs to the N-acetylglucosamine-1-phosphate uridyltransferase family. It in the C-terminal section; belongs to the transferase hexapeptide repeat family. In terms of assembly, homotrimer. Mg(2+) is required as a cofactor.

It is found in the cytoplasm. The catalysed reaction is alpha-D-glucosamine 1-phosphate + acetyl-CoA = N-acetyl-alpha-D-glucosamine 1-phosphate + CoA + H(+). It carries out the reaction N-acetyl-alpha-D-glucosamine 1-phosphate + UTP + H(+) = UDP-N-acetyl-alpha-D-glucosamine + diphosphate. Its pathway is nucleotide-sugar biosynthesis; UDP-N-acetyl-alpha-D-glucosamine biosynthesis; N-acetyl-alpha-D-glucosamine 1-phosphate from alpha-D-glucosamine 6-phosphate (route II): step 2/2. It participates in nucleotide-sugar biosynthesis; UDP-N-acetyl-alpha-D-glucosamine biosynthesis; UDP-N-acetyl-alpha-D-glucosamine from N-acetyl-alpha-D-glucosamine 1-phosphate: step 1/1. It functions in the pathway bacterial outer membrane biogenesis; LPS lipid A biosynthesis. In terms of biological role, catalyzes the last two sequential reactions in the de novo biosynthetic pathway for UDP-N-acetylglucosamine (UDP-GlcNAc). The C-terminal domain catalyzes the transfer of acetyl group from acetyl coenzyme A to glucosamine-1-phosphate (GlcN-1-P) to produce N-acetylglucosamine-1-phosphate (GlcNAc-1-P), which is converted into UDP-GlcNAc by the transfer of uridine 5-monophosphate (from uridine 5-triphosphate), a reaction catalyzed by the N-terminal domain. In Wolinella succinogenes (strain ATCC 29543 / DSM 1740 / CCUG 13145 / JCM 31913 / LMG 7466 / NCTC 11488 / FDC 602W) (Vibrio succinogenes), this protein is Bifunctional protein GlmU.